Reading from the N-terminus, the 475-residue chain is UDP-N-acetylmuramate--L-alanine ligase (475 aa).

114–120 (GTHGKTT) is an ATP binding site.

It belongs to the MurCDEF family.

Its subcellular location is the cytoplasm. It catalyses the reaction UDP-N-acetyl-alpha-D-muramate + L-alanine + ATP = UDP-N-acetyl-alpha-D-muramoyl-L-alanine + ADP + phosphate + H(+). The protein operates within cell wall biogenesis; peptidoglycan biosynthesis. In terms of biological role, cell wall formation. This chain is UDP-N-acetylmuramate--L-alanine ligase, found in Bartonella quintana (strain Toulouse) (Rochalimaea quintana).